The chain runs to 177 residues: Translation initiation factor IF-3 (177 aa).

It belongs to the IF-3 family. As to quaternary structure, monomer.

It is found in the cytoplasm. Functionally, IF-3 binds to the 30S ribosomal subunit and shifts the equilibrium between 70S ribosomes and their 50S and 30S subunits in favor of the free subunits, thus enhancing the availability of 30S subunits on which protein synthesis initiation begins. This is Translation initiation factor IF-3 from Nitratiruptor sp. (strain SB155-2).